The chain runs to 666 residues: MQDFFGSVRRSLVFRPSSDDDNQENQPPFPGVLADKITSCIRKSKIFIKPSFSPPPPANTVDMAPPISWRKGQLIGRGAFGTVYMGMNLDSGELLAVKQVLIAANFASKEKTQAHIQELEEEVKLLKNLSHPNIVRYLGTVREDDTLNILLEFVPGGSISSLLEKFGPFPESVVRTYTRQLLLGLEYLHNHAIMHRDIKGANILVDNKGCIKLADFGASKQVAELATMTGAKSMKGTPYWMAPEVILQTGHSFSADIWSVGCTVIEMVTGKAPWSQQYKEVAAIFFIGTTKSHPPIPDTLSSDAKDFLLKCLQEVPNLRPTASELLKHPFVMGKHKESASTDLGSVLNNLSTPLPLQINNTKSTPDSTCDDVGDMCNFGSLNYSLVDPVKSIQNKNLWQQNDNGGDEDDMCLIDDENFLTFDGEMSSTLEKDCHLKKSCDDISDMSIALKSKFDESPGNGEKESTMSMECDQPSYSEDDDELTESKIKAFLDEKAADLKKLQTPLYEEFYNSLITFSPSCMESNLSNSKREDTARGFLKLPPKSRSPSRGPLGGSPSRATDATSCSKSPGSGGSRELNINNGGDEASQDGVSARVTDWRGLVVDTKQELSQCVALSEIEKKWKEELDQELERKRQEIMRQAGLGSSPRDRGMSRQREKSRFASPGK.

The 263-residue stretch at 69–331 folds into the Protein kinase domain; it reads WRKGQLIGRG…ASELLKHPFV (263 aa). Residues 75–83 and Lys-98 contribute to the ATP site; that span reads IGRGAFGTV. A coiled-coil region spans residues 101 to 131; that stretch reads LIAANFASKEKTQAHIQELEEEVKLLKNLSH. Glycyl lysine isopeptide (Lys-Gly) (interchain with G-Cter in ubiquitin) cross-links involve residues Lys-109 and Lys-111. The active-site Proton acceptor is the Asp-197. Basic and acidic residues predominate over residues 452-464; the sequence is KFDESPGNGEKES. 3 disordered regions span residues 452–481, 536–592, and 635–666; these read KFDESPGNGEKESTMSMECDQPSYSEDDDE, GFLK…DGVS, and QEIMRQAGLGSSPRDRGMSRQREKSRFASPGK. Residues 538-558 show a composition bias toward low complexity; sequence LKLPPKSRSPSRGPLGGSPSR. Residues 560–569 are compositionally biased toward polar residues; it reads TDATSCSKSP. The stretch at 620–643 forms a coiled coil; that stretch reads KKWKEELDQELERKRQEIMRQAGL. The span at 647-660 shows a compositional bias: basic and acidic residues; the sequence is PRDRGMSRQREKSR.

Belongs to the protein kinase superfamily. STE Ser/Thr protein kinase family. MAP kinase kinase kinase subfamily. As to expression, expressed in roots, inflorescence stems, flower buds and flowers. Low amount in rosette and cauline leaves.

The catalysed reaction is L-seryl-[protein] + ATP = O-phospho-L-seryl-[protein] + ADP + H(+). It catalyses the reaction L-threonyl-[protein] + ATP = O-phospho-L-threonyl-[protein] + ADP + H(+). Functionally, may be involved in an oxidative stress-mediated signaling cascade that phosphorylates downstream MAP kinases MPK3 and MPK6. May suppress auxin signaling that promotes cell cycle. Functionally redundant to ANP2 and ANP3 in the positive regulation of cytokinesis. This Arabidopsis thaliana (Mouse-ear cress) protein is Mitogen-activated protein kinase kinase kinase ANP1 (ANP1).